Here is a 204-residue protein sequence, read N- to C-terminus: Ribosomal RNA small subunit methyltransferase G (204 aa).

S-adenosyl-L-methionine contacts are provided by Gly73, Phe78, and Arg139.

It belongs to the methyltransferase superfamily. RNA methyltransferase RsmG family.

The protein localises to the cytoplasm. The enzyme catalyses guanosine(527) in 16S rRNA + S-adenosyl-L-methionine = N(7)-methylguanosine(527) in 16S rRNA + S-adenosyl-L-homocysteine. In terms of biological role, specifically methylates the N7 position of guanine in position 527 of 16S rRNA. In Coxiella burnetii (strain CbuG_Q212) (Coxiella burnetii (strain Q212)), this protein is Ribosomal RNA small subunit methyltransferase G.